Consider the following 573-residue polypeptide: MRALLPYLALYKRHKWMLSLGIVLAIVTLLASIGLLTLSGWFLSASAVAGVAGLYSFNYMLPAAGVRGAAITRTAGRYFERLVSHDATFRVLQHLRIYTFSKLLPLSPAGLARYRQGELLNRVVADVDTLDHLYLRVISPLVGAFVVIMVVTIGLSFLDFTLAFTLGGIMLLTLFLMPPLFYRAGKSTGQNLTHLRGQYRQQLTAWLQGQAELTIFGASDRYRTQLENTEIQWLEAQRRQSELTALSQAIMLLIGALAVILMLWMASGGVGGNAQPGALIALFVFCALAAFEALAPVTGAFQHLGQVIASAVRISDLTDQKPEVTFPDTQTRVADRVSLTLRDVQFTYPEQSQQALKGISLQVNAGEHIAILGRTGCGKSTLLQQLTRAWDPQQGEILLNDSPIASLNEAALRQTISVVPQRVHLFSATLRDNLLLASPGSSDEALSEILRRVGLEKLLEDAGLNSWLGEGGRQLSGGELRRLAIARALLHDAPLVLLDEPTEGLDATTESQILELLAEMMREKTVLMVTHRLRGLSRFQQIIVMDNGQIIEQGTHAELLARQGRYYQFKQGL.

Residues 1–15 (MRALLPYLALYKRHK) are Cytoplasmic-facing. Transmembrane regions (helical) follow at residues 16-36 (WMLS…IGLL) and 37-57 (TLSG…LYSF). Residues 20–306 (LGIVLAIVTL…VTGAFQHLGQ (287 aa)) form the ABC transmembrane type-1 domain. The Cytoplasmic portion of the chain corresponds to 58-136 (NYMLPAAGVR…VDTLDHLYLR (79 aa)). A helical membrane pass occupies residues 137 to 157 (VISPLVGAFVVIMVVTIGLSF). Residues 158–161 (LDFT) lie on the Periplasmic side of the membrane. The chain crosses the membrane as a helical span at residues 162–182 (LAFTLGGIMLLTLFLMPPLFY). The Cytoplasmic portion of the chain corresponds to 183–249 (RAGKSTGQNL…QSELTALSQA (67 aa)). Residues 250–270 (IMLLIGALAVILMLWMASGGV) traverse the membrane as a helical segment. Topologically, residues 271 to 276 (GGNAQP) are periplasmic. Residues 277-297 (GALIALFVFCALAAFEALAPV) form a helical membrane-spanning segment. The Cytoplasmic portion of the chain corresponds to 298-573 (TGAFQHLGQV…GRYYQFKQGL (276 aa)). One can recognise an ABC transporter domain in the interval 339–572 (LTLRDVQFTY…QGRYYQFKQG (234 aa)). An ATP-binding site is contributed by 373–380 (GRTGCGKS).

This sequence belongs to the ABC transporter superfamily. Cysteine exporter (TC 3.A.1.129.1) family. As to quaternary structure, forms a heterodimer with CydD.

It localises to the cell inner membrane. It carries out the reaction L-cysteine(in) + ATP + H2O = L-cysteine(out) + ADP + phosphate + H(+). It catalyses the reaction glutathione(in) + ATP + H2O = glutathione(out) + ADP + phosphate + H(+). With respect to regulation, ATPase activity is stimulated by various thiol compounds. The presence of heme leads to a further enhancement of thiol-stimulated ATPase activity, although a large excess of heme inhibits activity. Glutathione transport is inhibited by sodium orthovanadate, an inhibitor of ABC-type transport systems, but not by the proton ionophore carbonyl cyanide m-chlorophenylhydrazone (CCCP). In terms of biological role, part of the ABC transporter complex CydDC that exports the reduced low-molecular-weight thiols cysteine and glutathione to the periplasm. Export of these thiol-containing redox-active molecules may be crucial for redox homeostasis in the periplasm, permitting correct assembly of various respiratory complexes and formation of correct disulfide bonds in periplasmic and secreted proteins. CydC contains transmembrane domains (TMD), which form a pore in the inner membrane, and an ATP-binding domain (NBD), which is responsible for energy generation. Required for the assembly of functional cytochrome bd-type quinol oxidases and periplasmic c-type cytochromes. Overexpression of CydDC under anaerobic conditions also results in the formation of a heme biosynthesis-derived pigment, P-574. CydDC binds heme b, but heme is probably not transported by the complex and instead has a role in regulating ATPase activity. Conversely, a more recent study suggests an alternative function of CydDC: authors suggest that CydDC does not mediate the export of L-cysteine but rather reduces cytoplasmic L-cystine to L-cysteine. The principle function of CydDC would be to maintain the reduced state of cytoplasmic L-cysteine, thereby providing an important connection between sulfur metabolism, oxidative stress and resistance to antibiotics. This chain is Glutathione/L-cysteine transport system ATP-binding/permease protein CydC, found in Escherichia coli (strain K12).